Here is a 476-residue protein sequence, read N- to C-terminus: uncharacterized protein (476 aa).

Residues 147 to 204 adopt a coiled-coil conformation; it reads DVRLAELRRRRAELEAEIAAVEAGDIAVLDPTAVRDRYQQLSTTARELLSDFREVEEN.

This is an uncharacterized protein from Mycolicibacterium smegmatis (strain ATCC 700084 / mc(2)155) (Mycobacterium smegmatis).